The chain runs to 72 residues: Caerin-regulated peptide (72 aa).

The signal sequence occupies residues 1–22 (MAFLKKSLLLVLFLGLVSLSIC). A propeptide spanning residues 23-43 (DEEKRENEDEEEQEDDEQSEE) is cleaved from the precursor. The interval 24 to 46 (EEKRENEDEEEQEDDEQSEEKRG) is disordered. The span at 30–41 (EDEEEQEDDEQS) shows a compositional bias: acidic residues.

In terms of tissue distribution, expressed by the skin glands.

It is found in the secreted. Its function is as follows. Has antibacterial activity against Gram-positive bacterium M.luteus NCT C2665 and against Gram-negative bacterium E.coli K12D31. This chain is Caerin-regulated peptide, found in Agalychnis callidryas (Red-eyed tree frog).